We begin with the raw amino-acid sequence, 315 residues long: Holliday junction branch migration complex subunit RuvB (315 aa).

A large ATPase domain (RuvB-L) region spans residues 1 to 168; sequence MAKKQEIRPK…FGLIGQISNY (168 aa). ATP contacts are provided by residues I7, R8, G49, K52, T53, S54, 115-117, R158, Y168, and R205; that span reads EDF. T53 contacts Mg(2+). The segment at 169 to 239 is small ATPAse domain (RuvB-S); sequence QVEDIEKIIK…LVNKTLKQLG (71 aa). The head domain (RuvB-H) stretch occupies residues 242 to 315; sequence ENGLNESQVK…QKGISYLERI (74 aa). Residues K297 and R302 each coordinate DNA.

This sequence belongs to the RuvB family. Homohexamer. Forms an RuvA(8)-RuvB(12)-Holliday junction (HJ) complex. HJ DNA is sandwiched between 2 RuvA tetramers; dsDNA enters through RuvA and exits via RuvB. An RuvB hexamer assembles on each DNA strand where it exits the tetramer. Each RuvB hexamer is contacted by two RuvA subunits (via domain III) on 2 adjacent RuvB subunits; this complex drives branch migration. In the full resolvosome a probable DNA-RuvA(4)-RuvB(12)-RuvC(2) complex forms which resolves the HJ.

It localises to the cytoplasm. The enzyme catalyses ATP + H2O = ADP + phosphate + H(+). The RuvA-RuvB-RuvC complex processes Holliday junction (HJ) DNA during genetic recombination and DNA repair, while the RuvA-RuvB complex plays an important role in the rescue of blocked DNA replication forks via replication fork reversal (RFR). RuvA specifically binds to HJ cruciform DNA, conferring on it an open structure. The RuvB hexamer acts as an ATP-dependent pump, pulling dsDNA into and through the RuvAB complex. RuvB forms 2 homohexamers on either side of HJ DNA bound by 1 or 2 RuvA tetramers; 4 subunits per hexamer contact DNA at a time. Coordinated motions by a converter formed by DNA-disengaged RuvB subunits stimulates ATP hydrolysis and nucleotide exchange. Immobilization of the converter enables RuvB to convert the ATP-contained energy into a lever motion, pulling 2 nucleotides of DNA out of the RuvA tetramer per ATP hydrolyzed, thus driving DNA branch migration. The RuvB motors rotate together with the DNA substrate, which together with the progressing nucleotide cycle form the mechanistic basis for DNA recombination by continuous HJ branch migration. Branch migration allows RuvC to scan DNA until it finds its consensus sequence, where it cleaves and resolves cruciform DNA. The polypeptide is Holliday junction branch migration complex subunit RuvB (Mycoplasmopsis pulmonis (strain UAB CTIP) (Mycoplasma pulmonis)).